The sequence spans 502 residues: Glycerol kinase (502 aa).

Thr-14 provides a ligand contact to ADP. Residues Thr-14, Thr-15, and Ser-16 each coordinate ATP. Thr-14 contributes to the sn-glycerol 3-phosphate binding site. Arg-18 is a binding site for ADP. Sn-glycerol 3-phosphate-binding residues include Arg-84, Glu-85, Tyr-136, and Asp-246. Glycerol contacts are provided by Arg-84, Glu-85, Tyr-136, Asp-246, and Gln-247. The ADP site is built by Thr-268 and Gly-311. Positions 268, 311, 315, and 412 each coordinate ATP. The ADP site is built by Gly-412 and Asn-416.

It belongs to the FGGY kinase family. Homotetramer and homodimer (in equilibrium). Heterodimer with EIIA-Glc. Binds 1 zinc ion per glycerol kinase EIIA-Glc dimer. The zinc ion is important for dimerization.

The catalysed reaction is glycerol + ATP = sn-glycerol 3-phosphate + ADP + H(+). Its pathway is polyol metabolism; glycerol degradation via glycerol kinase pathway; sn-glycerol 3-phosphate from glycerol: step 1/1. Its activity is regulated as follows. Activity of this regulatory enzyme is affected by several metabolites. Allosterically and non-competitively inhibited by fructose 1,6-bisphosphate (FBP) and unphosphorylated phosphocarrier protein EIIA-Glc (III-Glc), an integral component of the bacterial phosphotransferase (PTS) system. Key enzyme in the regulation of glycerol uptake and metabolism. Catalyzes the phosphorylation of glycerol to yield sn-glycerol 3-phosphate. The protein is Glycerol kinase of Shigella boydii serotype 18 (strain CDC 3083-94 / BS512).